A 597-amino-acid chain; its full sequence is Pentatricopeptide repeat-containing protein At2g21090 (597 aa).

13 PPR repeats span residues 45-79, 81-111, 112-142, 143-177, 178-212, 213-243, 244-274, 275-309, 310-344, 345-375, 377-411, 412-447, and 448-478; these read PFDLLASLLQQCGDTKSLKQGKWIHRHLKITGFKR, NTLLSNHLIGMYMKCGKPIDACKVFDQMHLR, NLYSWNNMVSGYVKSGMLVRARVVFDSMPER, DVVSWNTMVIGYAQDGNLHEALWFYKEFRRSGIKF, NEFSFAGLLTACVKSRQLQLNRQAHGQVLVAGFLS, NVVLSCSIIDAYAKCGQMESAKRCFDEMTVK, DIHIWTTLISGYAKLGDMEAAEKLFCEMPEK, NPVSWTALIAGYVRQGSGNRALDLFRKMIALGVKP, EQFTFSSCLCASASIASLRHGKEIHGYMIRTNVRP, NAIVISSLIDMYSKSGSLEASERVFRICDDK, DCVFWNTMISALAQHGLGHKALRMLDDMIKFRVQP, NRTTLVVILNACSHSGLVEEGLRWFESMTVQHGIVP, and DQEHYACLIDLLGRAGCFKELMRKIEEMPFE. Residues 483–558 are type E motif; the sequence is IWNAILGVCR…EKAVSWIEIE (76 aa). Residues 559–591 are type E(+) motif; the sequence is KKVEAFTVSDGSHAHARKEEIYFILHNLAAVIE.

The protein belongs to the PPR family. PCMP-E subfamily.

In Arabidopsis thaliana (Mouse-ear cress), this protein is Pentatricopeptide repeat-containing protein At2g21090 (PCMP-E48).